Here is a 1033-residue protein sequence, read N- to C-terminus: Error-prone DNA polymerase (1033 aa).

The protein belongs to the DNA polymerase type-C family. DnaE2 subfamily.

The protein resides in the cytoplasm. The enzyme catalyses DNA(n) + a 2'-deoxyribonucleoside 5'-triphosphate = DNA(n+1) + diphosphate. Its function is as follows. DNA polymerase involved in damage-induced mutagenesis and translesion synthesis (TLS). It is not the major replicative DNA polymerase. The chain is Error-prone DNA polymerase from Teredinibacter turnerae (strain ATCC 39867 / T7901).